Here is a 480-residue protein sequence, read N- to C-terminus: Vinorine hydroxylase (480 aa).

The helical transmembrane segment at 3 to 23 (LLQILLAIAGLLAILLLQKQW) threads the bilayer. Cysteine 418 contacts heme.

This sequence belongs to the cytochrome P450 family. Heme is required as a cofactor. Mainly expressed in roots and, to a lesser extent, in leaves.

The protein localises to the membrane. It carries out the reaction vinorine + reduced [NADPH--hemoprotein reductase] + O2 = vomilenine + oxidized [NADPH--hemoprotein reductase] + H2O + H(+). It catalyses the reaction vomilenine = perakine. It functions in the pathway alkaloid biosynthesis; ajmaline biosynthesis. Functionally, a cytochrome P450 monooxygenase involved in the biosynthesis of ajmaline-type monoterpenoid indole alkaloids (MIAs) natural products, important plant-derived pharmaceuticals used in the therapy of heart disorders. Catalyzes the hydroxylation of vinorine to vomilenine, an intermediate chemical in the biosynthesis of ajmaline. Supports also vomilenine isomerization to perakine. The sequence is that of Vinorine hydroxylase from Rauvolfia serpentina (Serpentine wood).